Consider the following 339-residue polypeptide: RxLR effector protein SFI4 (339 aa).

A signal peptide spans M1 to A24. Residues R51–R74 carry the RxLR-dEER motif. 4 TPR repeats span residues A106–I139, I190–E223, A232–R265, and A274–I307.

It belongs to the RxLR effector family.

Its subcellular location is the secreted. The protein localises to the host nucleus. It is found in the host cytoplasm. In terms of biological role, effector that suppresses flg22-induced post-translational MAP kinase activation in tomato but not in Arabidopsis. The perception of highly conserved pathogen- or microbe-associated molecular patterns (PAMPs/MAMPs), such as flg22, triggers converging signaling pathways recruiting MAP kinase cascades and inducing transcriptional re-programming, yielding a generic antimicrobial response. The chain is RxLR effector protein SFI4 from Phytophthora infestans (strain T30-4) (Potato late blight agent).